A 144-amino-acid polypeptide reads, in one-letter code: UPF0102 protein sce2912 (144 aa).

It belongs to the UPF0102 family.

This chain is UPF0102 protein sce2912, found in Sorangium cellulosum (strain So ce56) (Polyangium cellulosum (strain So ce56)).